The following is a 665-amino-acid chain: MAGMKTATGDYIDSSWELRVFIGEEDPEAESLTLRVTGESHIGGVLLKIVEEIKRKQDWSDHAIWWEQKRQWLLQTHWTLDKYGILADARLFFGPQHRPVILRLPNRRALRLRASFSQPLFQAMVAICRLLSIRHPEEMSLLRAPEKEKKKKKEKEPEEEVYDLTKVVLVGGVAPASFRGMPAHFSDSAQTEACYHMLSRPQPPPDPLLLQRLPRPSSLLDKTQLHSRWLDSSRCLMQQGIKAGDTLWLRFKYYSFFDLDPKTDPVRLTQLYEQARWDLLLEEIDCTEEEMMVFAALQYHINKLSQSGEVDEPAGTDSGLDDLDLALSNLEVKLEGSAPTDMLDSLTTIPELKDHLRIFRPRKLTLKGYRQHWVVFKETTLSYYKSQDEAPGEPIQQLNLKGCEVVPDVNVSGQKFCIKLLVPSPEGMSEIYLRCQDEQQYARWMAGCRLASKGRTMADSSYSSEVQAILAFLSLQRTGGGGGGSGNHPQGPDASAEGLNPYGLVAPRFQRKFKAKQLTPRILEAHQNVAQLSLSEAQLRFIQAWQSLPDFGISYVVVRFKGSRKDEILGIANNRLIRIDLSVGDVVKTWRFSNMRQWNVNWDIRQVAIEFDEHINVAFSCVSASCRIVHEYIGGYIFLSTRERARGEELDEDLFLQLTGGHEAF.

The residue at position 11 (tyrosine 11) is a Phosphotyrosine. An FERM domain is found at 229–556; the sequence is WLDSSRCLMQ…SLPDFGISYV (328 aa). One can recognise a PH domain in the interval 354-453; the sequence is DHLRIFRPRK…WMAGCRLASK (100 aa). Tyrosine 502 is subject to Phosphotyrosine. Threonine 589 bears the Phosphothreonine mark.

This sequence belongs to the kindlin family. In terms of assembly, interacts with ITGB1, ITGB2 and ITGB3 (via cytoplasmic tails).

It is found in the cell projection. The protein resides in the podosome. Functionally, plays a central role in cell adhesion in hematopoietic cells. Acts by activating the integrin beta-1-3 (ITGB1, ITGB2 and ITGB3). Required for integrin-mediated platelet adhesion and leukocyte adhesion to endothelial cells. Required for activation of integrin beta-2 (ITGB2) in polymorphonuclear granulocytes (PMNs). The polypeptide is Fermitin family homolog 3 (FERMT3) (Bos taurus (Bovine)).